Here is a 290-residue protein sequence, read N- to C-terminus: Acetyl-coenzyme A carboxylase carboxyl transferase subunit beta (290 aa).

The CoA carboxyltransferase N-terminal domain occupies 28 to 290; it reads VMTKCPQCKK…KGGEEGWWRN (263 aa). Positions 32, 35, 51, and 54 each coordinate Zn(2+). The C4-type zinc-finger motif lies at 32–54; that stretch reads CPQCKKIMYTKELIKNLRVCLSC.

Belongs to the AccD/PCCB family. In terms of assembly, acetyl-CoA carboxylase is a heterohexamer composed of biotin carboxyl carrier protein (AccB), biotin carboxylase (AccC) and two subunits each of ACCase subunit alpha (AccA) and ACCase subunit beta (AccD). It depends on Zn(2+) as a cofactor.

It localises to the cytoplasm. It catalyses the reaction N(6)-carboxybiotinyl-L-lysyl-[protein] + acetyl-CoA = N(6)-biotinyl-L-lysyl-[protein] + malonyl-CoA. It participates in lipid metabolism; malonyl-CoA biosynthesis; malonyl-CoA from acetyl-CoA: step 1/1. Component of the acetyl coenzyme A carboxylase (ACC) complex. Biotin carboxylase (BC) catalyzes the carboxylation of biotin on its carrier protein (BCCP) and then the CO(2) group is transferred by the transcarboxylase to acetyl-CoA to form malonyl-CoA. This chain is Acetyl-coenzyme A carboxylase carboxyl transferase subunit beta, found in Geobacillus kaustophilus (strain HTA426).